Here is a 601-residue protein sequence, read N- to C-terminus: MEGADLLTAGVLFLFAAVAAVPLAARLGIGAVLGYLLAGIAIGPWGLGFISDVDEILHFSELGVVFLMFIIGLELNPSRLWQLRRSIFGVGAAQVLLSAAVLAGLLMLADFLWQAAVVGGIGLAMSSTAMALQLMREKGMNRSESGQLGFSVLLFQDLAVIPALALVPLLAGSADEHFDWFKVAMKVLAFAVMLIGGRYLLRPVFRFIAASGVREVFTAATLLLVLSAALFMDALGLSMALGTFIAGVLLAESEYRHELENAIDPFKGLLLGLFFISVGMSLNLGVLYTHLLWVAASVVILVVIKMLTLYLLARLYGIRSSERMQFASVLSQGGEFAFVLFSTASSQRLFQGDQMALLLVTVTLSMMTTPLLMKGIDKWLSRRLNGPEENDEKPWVEDDKPQVIVVGFGRFGQVIARLLMANKMRITVLERDIGAVNLMRKYGYKVYYGDATQVELLRSAGAEAAESIVITCNEPEDTMKLVELCQQHFPHLHILARARGRVEAHELLQAGVTQFSRETFSSALELGRKTLVSLGMHPHQAQRAQLHFRRLDMRMLRELIPEHSDMVQISRAREARRELEEIFQREMQQERRQLDGWDKFE.

A run of 13 helical transmembrane segments spans residues 4 to 24 (ADLL…VPLA), 29 to 49 (IGAV…GLGF), 55 to 75 (EILH…GLEL), 87 to 107 (IFGV…GLLM), 111 to 131 (FLWQ…TAMA), 152 to 172 (VLLF…LLAG), 177 to 197 (HFDW…LIGG), 207 to 227 (FIAA…LVLS), 230 to 250 (LFMD…GVLL), 262 to 282 (AIDP…GMSL), 284 to 304 (LGVL…LVVI), 324 to 344 (MQFA…FSTA), and 356 to 376 (ALLL…MKGI). The region spanning 400–519 (KPQVIVVGFG…AGVTQFSRET (120 aa)) is the RCK N-terminal domain.

This sequence belongs to the monovalent cation:proton antiporter 2 (CPA2) transporter (TC 2.A.37) family. KefB subfamily. As to quaternary structure, interacts with the regulatory subunit KefG.

The protein resides in the cell inner membrane. Functionally, pore-forming subunit of a potassium efflux system that confers protection against electrophiles. Catalyzes K(+)/H(+) antiport. In Salmonella dublin (strain CT_02021853), this protein is Glutathione-regulated potassium-efflux system protein KefB.